Here is a 328-residue protein sequence, read N- to C-terminus: Glyoxylate reductase/hydroxypyruvate reductase (328 aa).

A Phosphoserine modification is found at serine 36. Residue 83–84 participates in substrate binding; the sequence is VG. NADP(+) contacts are provided by residues 162–164, 185–188, serine 217, and isoleucine 243; these read GRI and RQPR. Residues arginine 245 and aspartate 269 each contribute to the substrate site. Serine 272 carries the phosphoserine modification. Histidine 293 acts as the Proton donor in catalysis. Residue 293–296 participates in substrate binding; sequence HIGS. Glycine 295 contacts NADP(+). The residue at position 298 (threonine 298) is a Phosphothreonine.

Belongs to the D-isomer specific 2-hydroxyacid dehydrogenase family. As to quaternary structure, homodimer. As to expression, ubiquitous. Most abundantly expressed in the liver.

It carries out the reaction glycolate + NADP(+) = glyoxylate + NADPH + H(+). The catalysed reaction is (R)-glycerate + NAD(+) = 3-hydroxypyruvate + NADH + H(+). It catalyses the reaction (R)-glycerate + NADP(+) = 3-hydroxypyruvate + NADPH + H(+). Functionally, enzyme with hydroxy-pyruvate reductase, glyoxylate reductase and D-glycerate dehydrogenase enzymatic activities. Reduces hydroxypyruvate to D-glycerate, glyoxylate to glycolate, oxidizes D-glycerate to hydroxypyruvate. This is Glyoxylate reductase/hydroxypyruvate reductase (GRHPR) from Homo sapiens (Human).